A 185-amino-acid polypeptide reads, in one-letter code: Translation initiation factor IF-3, chloroplastic (185 aa).

The protein belongs to the IF-3 family. Monomer.

The protein resides in the plastid. Its subcellular location is the chloroplast. IF-3 binds to the 30S ribosomal subunit and shifts the equilibrium between 70S ribosomes and their 50S and 30S subunits in favor of the free subunits, thus enhancing the availability of 30S subunits on which protein synthesis initiation begins. The sequence is that of Translation initiation factor IF-3, chloroplastic from Cyanidium caldarium (Red alga).